The primary structure comprises 209 residues: Large ribosomal subunit protein uL3 (209 aa).

This sequence belongs to the universal ribosomal protein uL3 family. Part of the 50S ribosomal subunit. Forms a cluster with proteins L14 and L19.

Its function is as follows. One of the primary rRNA binding proteins, it binds directly near the 3'-end of the 23S rRNA, where it nucleates assembly of the 50S subunit. The protein is Large ribosomal subunit protein uL3 of Pelobacter propionicus (strain DSM 2379 / NBRC 103807 / OttBd1).